A 268-amino-acid polypeptide reads, in one-letter code: Undecaprenyl-diphosphatase (268 aa).

Transmembrane regions (helical) follow at residues 5-25 (SIISALVLGLIEGLTEFIPVS), 43-63 (GNTFAVLIQLGAILAILLVYF), 84-104 (LSVLLAFLPAALIGAAAHGFI), 109-129 (FETPMLICVVLIVGGIILYVI), 184-204 (AAEFSFFLAMPTMVGAFALDL), 213-233 (IDDIGLIAAGFIAAFIAGIFV), and 248-268 (PFAIWRILVGTAGLVGLWLLG).

It belongs to the UppP family.

It localises to the cell inner membrane. It catalyses the reaction di-trans,octa-cis-undecaprenyl diphosphate + H2O = di-trans,octa-cis-undecaprenyl phosphate + phosphate + H(+). Its function is as follows. Catalyzes the dephosphorylation of undecaprenyl diphosphate (UPP). Confers resistance to bacitracin. This Sinorhizobium medicae (strain WSM419) (Ensifer medicae) protein is Undecaprenyl-diphosphatase.